Here is a 72-residue protein sequence, read N- to C-terminus: MSKSDYIELEGVVKEKLPNTIFTVELENGHRILAHISGKIRKHYIRILPGDKVTVEMTPYDLTKGRIIFRHK.

The 72-residue stretch at 1-72 (MSKSDYIELE…TKGRIIFRHK (72 aa)) folds into the S1-like domain.

It belongs to the IF-1 family. As to quaternary structure, component of the 30S ribosomal translation pre-initiation complex which assembles on the 30S ribosome in the order IF-2 and IF-3, IF-1 and N-formylmethionyl-tRNA(fMet); mRNA recruitment can occur at any time during PIC assembly.

The protein localises to the cytoplasm. Functionally, one of the essential components for the initiation of protein synthesis. Stabilizes the binding of IF-2 and IF-3 on the 30S subunit to which N-formylmethionyl-tRNA(fMet) subsequently binds. Helps modulate mRNA selection, yielding the 30S pre-initiation complex (PIC). Upon addition of the 50S ribosomal subunit IF-1, IF-2 and IF-3 are released leaving the mature 70S translation initiation complex. In Ruthia magnifica subsp. Calyptogena magnifica, this protein is Translation initiation factor IF-1.